We begin with the raw amino-acid sequence, 873 residues long: MHEQYQPLEIETQAQNYWKEHQSFLVRELPDKEKFYCLSMFPYPSGKLHMGHVRNYTIGDVISRYHRMQGRNVLQPMGWDAFGMPAENAAMKNNVAPAAWTYDNIAYMKSQLDSLGLAIDWSREVTTCKPDYYRWEQWLFTRLFEKGVIYRKNGTVNWDPVDQTVLANEQVIDGRGWRSGALIEKREIPMYYFKITAYAEELLESLDNLPGWPEQVKTMQRNWIGKSRGMEIGFPYDQASIGHAGQLKVFTTRPDTLMGATYVAVAAEHPLATQAAQNDPQLQAFIDECKRGGVAEADIATQEKKGMATSLFVEHPLTGDKLPVWVANYVLMNYGEGAVMAVPGHDERDFEFANKYGLPIRQVIAKVEGDNDFESSVWKEWYGAKDESVLTVNSGKYDNLGYQAAFDAIGADLEAKGLGQARTQFRLRDWGISRQRYWGCPIPIIHCEACGDVPVPADQLPVVLPEDVVPDGSGSPLAKMPEFYECNCPKCGQPAKRETDTMDTFVESSWYFARYACPQFEGGMLDRKAADYWLPVDQYIGGIEHAILHLLYARFFHKLMRDEGLVGSDEPFKNLLTQGMVVADTYYRTTANGGKDWFNPADVEVERDAKAKVVGARLKSDGQPVEIGGTEKMSKSKNNGVDPQSMIDQYGADTCRLFMMFASPPDMSLEWSDAGVEGANRFLRRVWRLAHAHVSAGLPGALDVATLSDAQKQVRRAIHLAIRQASQDVGQHHKFNTAIAAVMTLMNVLEKAPNQDAQDRALIQEGLETVVLLLAPITPHICHVLWGQLGHAEAVIDARWPSVDESALVQDTLQLVVQVNGKLRGHIDVAASASREDVEAAARANENVLRFTEGLSIRKVIVVPGKLVNIVAN.

The 'HIGH' region signature appears at P42–H52. Residues P624–P643 are disordered. The short motif at K632–S636 is the 'KMSKS' region element. K635 contributes to the ATP binding site.

The protein belongs to the class-I aminoacyl-tRNA synthetase family.

Its subcellular location is the cytoplasm. It catalyses the reaction tRNA(Leu) + L-leucine + ATP = L-leucyl-tRNA(Leu) + AMP + diphosphate. The protein is Leucine--tRNA ligase of Pseudomonas aeruginosa (strain LESB58).